We begin with the raw amino-acid sequence, 158 residues long: uncharacterized protein (158 aa).

Residues 1-21 (MPHTGSQHTLQATPKTAQHTG) are compositionally biased toward polar residues. Disordered stretches follow at residues 1–89 (MPHT…RVEG) and 107–158 (EEEK…DAKT). 2 stretches are compositionally biased toward basic and acidic residues: residues 51-68 (HTEG…DKAG) and 107-127 (EEEK…RESR). A compositionally biased stretch (polar residues) spans 128–137 (QGTAHKSTCM). Residues 149-158 (EIGKVEDAKT) are compositionally biased toward basic and acidic residues.

This is an uncharacterized protein from Encephalitozoon cuniculi (strain GB-M1) (Microsporidian parasite).